We begin with the raw amino-acid sequence, 270 residues long: 3-methyl-2-oxobutanoate hydroxymethyltransferase (270 aa).

Mg(2+) is bound by residues Asp43 and Asp82. 3-methyl-2-oxobutanoate is bound by residues 43 to 44 (DS), Asp82, and Lys110. Residue Glu112 participates in Mg(2+) binding. Glu179 acts as the Proton acceptor in catalysis.

It belongs to the PanB family. Homodecamer; pentamer of dimers. Mg(2+) serves as cofactor.

It is found in the cytoplasm. The catalysed reaction is 3-methyl-2-oxobutanoate + (6R)-5,10-methylene-5,6,7,8-tetrahydrofolate + H2O = 2-dehydropantoate + (6S)-5,6,7,8-tetrahydrofolate. It participates in cofactor biosynthesis; (R)-pantothenate biosynthesis; (R)-pantoate from 3-methyl-2-oxobutanoate: step 1/2. Functionally, catalyzes the reversible reaction in which hydroxymethyl group from 5,10-methylenetetrahydrofolate is transferred onto alpha-ketoisovalerate to form ketopantoate. This is 3-methyl-2-oxobutanoate hydroxymethyltransferase from Psychrobacter sp. (strain PRwf-1).